Here is a 589-residue protein sequence, read N- to C-terminus: Protein kinase G11A (589 aa).

The interval 1–167 (MASKAMPRAP…SACSSISSVT (167 aa)) is disordered. Composition is skewed to polar residues over residues 15 to 36 (NLQS…SPSK) and 63 to 76 (TQHQ…TGSN). The span at 91 to 100 (RLADEEKGVV) shows a compositional bias: basic and acidic residues. Over residues 142–165 (SSSRCRPSTSSDVSDESACSSISS) the composition is skewed to low complexity. In terms of domain architecture, Protein kinase spans 195 to 533 (FKLLKKLGCG…ATEIKQHPFF (339 aa)). ATP contacts are provided by residues 201–209 (LGCGDIGSV) and K224. D320 (proton acceptor) is an active-site residue. A disordered region spans residues 551–589 (RPVEIERPPKQPVSTSEPAAAPSDAAQKSSDSYLEFDFF).

Belongs to the protein kinase superfamily. Ser/Thr protein kinase family.

It catalyses the reaction L-seryl-[protein] + ATP = O-phospho-L-seryl-[protein] + ADP + H(+). The enzyme catalyses L-threonyl-[protein] + ATP = O-phospho-L-threonyl-[protein] + ADP + H(+). In terms of biological role, may play a role in the regulation of metabolism and signal transduction processes. This chain is Protein kinase G11A, found in Oryza sativa subsp. japonica (Rice).